A 307-amino-acid polypeptide reads, in one-letter code: Oxygen-dependent coproporphyrinogen-III oxidase (307 aa).

A substrate-binding site is contributed by Ser99. Residues His103 and His113 each coordinate a divalent metal cation. The active-site Proton donor is His113. 115–117 (NVR) provides a ligand contact to substrate. Residues His152 and His182 each contribute to the a divalent metal cation site. The important for dimerization stretch occupies residues 247 to 282 (YVEFNLVFDRGTLFGLQSGGRTESILLSMPPTAGWR). Residue 265-267 (GGR) participates in substrate binding.

Belongs to the aerobic coproporphyrinogen-III oxidase family. Homodimer. Requires a divalent metal cation as cofactor.

It is found in the cytoplasm. The enzyme catalyses coproporphyrinogen III + O2 + 2 H(+) = protoporphyrinogen IX + 2 CO2 + 2 H2O. The protein operates within porphyrin-containing compound metabolism; protoporphyrin-IX biosynthesis; protoporphyrinogen-IX from coproporphyrinogen-III (O2 route): step 1/1. Involved in the heme biosynthesis. Catalyzes the aerobic oxidative decarboxylation of propionate groups of rings A and B of coproporphyrinogen-III to yield the vinyl groups in protoporphyrinogen-IX. In Burkholderia mallei (strain SAVP1), this protein is Oxygen-dependent coproporphyrinogen-III oxidase.